The sequence spans 421 residues: MDETTLTPDRARQRFRAGLVRPAAGMAPGHAQANLVIVPRELAFDVLLFAPRNPKPCPVLGVLDAGETTGALLPGGDIRTDVPQYVVYENGVEVARPHDITPYWREDLVTVMLGCSFTFEDALQAHGIRLAHIDQGVNVPMYRTSRRCESAGRLSGPLVVSMRPVPAARVADAVRITSRYPAVHGAPVHVGDPGALGSRTWGHRTSATPCGSPPARFPCSGRAGSRRRPRWWSRLRRSPSPTPRATCSSPTPGTPTTRCPDGARERGGRALVHPCGVRSLPTRQPQPRPAVSRGSPVTPVARRRRLWLAALTRAGRGSRPVRHPGSPAATVPPGPGRRTPAPRAPRRCAPRSGRGTPCRRASRGTPGASSRGPGPCPRAAPVRRRPPPAPGGSAGSRPTWRPRRRSPALPAPRTRCPAVSR.

Disordered stretches follow at residues 200–298 (TWGH…SPVT) and 312–421 (TRAG…AVSR). The segment covering 224 to 237 (GSRRRPRWWSRLRR) has biased composition (basic residues). Low complexity-rich tracts occupy residues 243 to 260 (PRAT…TRCP) and 370 to 380 (SRGPGPCPRAA).

Belongs to the D-glutamate cyclase family.

The protein is Putative hydro-lyase KRH_21160 of Kocuria rhizophila (strain ATCC 9341 / DSM 348 / NBRC 103217 / DC2201).